The chain runs to 246 residues: Triosephosphate isomerase (246 aa).

A substrate-binding site is contributed by 9-11 (NWK). Catalysis depends on histidine 99, which acts as the Electrophile. Glutamate 168 serves as the catalytic Proton acceptor. Substrate-binding positions include glycine 174, serine 207, and 228-229 (GG).

Belongs to the triosephosphate isomerase family. As to quaternary structure, homodimer.

It is found in the cytoplasm. It carries out the reaction D-glyceraldehyde 3-phosphate = dihydroxyacetone phosphate. It participates in carbohydrate biosynthesis; gluconeogenesis. The protein operates within carbohydrate degradation; glycolysis; D-glyceraldehyde 3-phosphate from glycerone phosphate: step 1/1. Involved in the gluconeogenesis. Catalyzes stereospecifically the conversion of dihydroxyacetone phosphate (DHAP) to D-glyceraldehyde-3-phosphate (G3P). The chain is Triosephosphate isomerase from Prochlorococcus marinus (strain NATL1A).